A 496-amino-acid polypeptide reads, in one-letter code: Glutamate--cysteine ligase B, chloroplastic (496 aa).

The transit peptide at 1–34 (MAVASRLAVARVAPDGGAAGRRRRRRGRPVVAVP) directs the protein to the chloroplast. Residues 14-53 (PDGGAAGRRRRRRGRPVVAVPTAAGRGRGRGGAVAASPPT) form a disordered region. Residues 29–38 (PVVAVPTAAG) are compositionally biased toward low complexity. An intrachain disulfide couples Cys-160 to Cys-380.

Belongs to the carboxylate-amine ligase family. Glutamate--cysteine ligase type 2 subfamily. Homodimer or monomer when oxidized or reduced, respectively. In terms of processing, the Cys-160-Cys-380 disulfide bridge is known to modulate the enzyme activity according to the redox status. The oxidized form constitutes the active enzyme.

Its subcellular location is the plastid. The protein localises to the chloroplast. It carries out the reaction L-cysteine + L-glutamate + ATP = gamma-L-glutamyl-L-cysteine + ADP + phosphate + H(+). It participates in sulfur metabolism; glutathione biosynthesis; glutathione from L-cysteine and L-glutamate: step 1/2. The protein is Glutamate--cysteine ligase B, chloroplastic (GSH1-2) of Oryza sativa subsp. japonica (Rice).